The sequence spans 92 residues: Phospholemman (92 aa).

The signal sequence occupies residues 1–20 (MAYLHHTLLVCMGLLAMANA). Over 22-35 (APQEQDPFTYDYQS) the chain is Extracellular. A helical transmembrane segment spans residues 36–56 (LRIGGLIIAGILFILGILIIL). Over 57–92 (KRGAWERFDTARRTGEPDEEEGTFRSSIRRLSTRRR) the chain is Cytoplasmic. Positions 67 to 92 (ARRTGEPDEEEGTFRSSIRRLSTRRR) are disordered. The residue at position 79 (Thr79) is a Phosphothreonine. Ser82 carries the phosphoserine modification. Ser83 carries the phosphoserine; by PKA and PKC modification. Positions 83–92 (SIRRLSTRRR) are enriched in basic residues. Phosphoserine; by PKA is present on Ser88. At Thr89 the chain carries Phosphothreonine; by PKC.

This sequence belongs to the FXYD family. As to quaternary structure, homotetramer. Monomer. Regulatory subunit of the sodium/potassium-transporting ATPase (NKA) which is composed of a catalytic alpha subunit, a non-catalytic beta subunit and an additional regulatory subunit. The monomeric form associates with NKA while the oligomeric form does not. Interacts with the catalytic alpha-1 subunit ATP1A1. Also interacts with the catalytic alpha-2 and alpha-3 subunits ATP1A2 and ATP1A3. Very little interaction with ATP1A1, ATP1A2 or ATP1A3 when phosphorylated at Ser-83. Interacts with the non-catalytic beta-1 subunit ATP1B1. Oxidative stress decreases interaction with ATP1A1 but increases interaction with ATP1B1. Major plasma membrane substrate for cAMP-dependent protein kinase (PKA) and protein kinase C (PKC) in several different tissues. Phosphorylated in response to insulin and adrenergic stimulation. Phosphorylation at Ser-88 stimulates sodium/potassium-transporting ATPase activity while the unphosphorylated form inhibits sodium/potassium-transporting ATPase activity. Phosphorylation increases tetramerization, decreases binding to ATP1A1 and reduces inhibition of ATP1A1 activity. Phosphorylation at Ser-83 leads to greatly reduced interaction with ATP1A1, ATP1A2 and ATP1A3. May be phosphorylated by DMPK. In terms of processing, palmitoylation increases half-life and stability and is enhanced upon phosphorylation at Ser-88 by PKA. Post-translationally, glutathionylated. In terms of tissue distribution, expressed in ventricular myocytes (at protein level).

The protein localises to the cell membrane. Its subcellular location is the sarcolemma. It is found in the apical cell membrane. It localises to the membrane. The protein resides in the caveola. The protein localises to the T-tubule. In terms of biological role, associates with and regulates the activity of the sodium/potassium-transporting ATPase (NKA) which transports Na(+) out of the cell and K(+) into the cell. Inhibits NKA activity in its unphosphorylated state and stimulates activity when phosphorylated. Reduces glutathionylation of the NKA beta-1 subunit ATP1B1, thus reversing glutathionylation-mediated inhibition of ATP1B1. Contributes to female sexual development by maintaining the excitability of neurons which secrete gonadotropin-releasing hormone. The polypeptide is Phospholemman (Oryctolagus cuniculus (Rabbit)).